The following is a 371-amino-acid chain: Transcription termination/antitermination protein NusA (371 aa).

The S1 motif domain maps to 135–199 (EDIMTGIVQR…KGPQIYVSRT (65 aa)). The region spanning 301–367 (EKATTVIVPD…EPLFTEPETA (67 aa)) is the KH domain. The tract at residues 347-371 (GIYPRELEEDDEPLFTEPETAESDE) is disordered. Acidic residues predominate over residues 353-371 (LEEDDEPLFTEPETAESDE).

The protein belongs to the NusA family. Monomer. Binds directly to the core enzyme of the DNA-dependent RNA polymerase and to nascent RNA.

It is found in the cytoplasm. Functionally, participates in both transcription termination and antitermination. In Bacillus subtilis (strain 168), this protein is Transcription termination/antitermination protein NusA.